Reading from the N-terminus, the 1177-residue chain is Lysylphosphatidylglycerol biosynthesis bifunctional protein LysX (1177 aa).

Disordered regions lie at residues 1–40 and 61–85; these read MRRA…AKFV and VTLA…PANR. The tract at residues 1–676 is phosphatidylglycerol lysyltransferase; it reads MRRAGRSRQF…LLHHDGSAPD (676 aa). Residues 8-21 are compositionally biased toward polar residues; it reads RQFSSVEEAFSTSA. Positions 65 to 82 are enriched in low complexity; the sequence is SPGSRSGSGPRSGPRLGP. The next 6 membrane-spanning stretches (helical) occupy residues 93 to 113, 135 to 155, 159 to 179, 189 to 209, 227 to 247, and 281 to 301; these read VPAA…LGSV, FPDT…ALTA, IAWL…VADI, IFGE…LVLA, AVLV…VELF, and VFLN…ATIV. A disordered region spans residues 673-693; it reads SAPDVSGLRPERTDAEEARSR. A lysine--tRNA ligase region spans residues 677-1177; it reads VSGLRPERTD…TLPFPLAKPH (501 aa). Over residues 681–693 the composition is skewed to basic and acidic residues; it reads RPERTDAEEARSR. Residues D1089 and E1096 each coordinate Mg(2+).

This sequence in the N-terminal section; belongs to the LPG synthetase family. The protein in the C-terminal section; belongs to the class-II aminoacyl-tRNA synthetase family. Requires Mg(2+) as cofactor.

Its subcellular location is the cell membrane. It catalyses the reaction tRNA(Lys) + L-lysine + ATP = L-lysyl-tRNA(Lys) + AMP + diphosphate. It carries out the reaction L-lysyl-tRNA(Lys) + a 1,2-diacyl-sn-glycero-3-phospho-(1'-sn-glycerol) = a 1,2-diacyl-sn-glycero-3-phospho-1'-(3'-O-L-lysyl)-sn-glycerol + tRNA(Lys). Its function is as follows. Catalyzes the production of L-lysyl-tRNA(Lys)transfer and the transfer of a lysyl group from L-lysyl-tRNA(Lys) to membrane-bound phosphatidylglycerol (PG), which produces lysylphosphatidylglycerol (LPG), one of the components of the bacterial membrane with a positive net charge. LPG synthesis contributes to the resistance to cationic antimicrobial peptides (CAMPs) and likely protects M.tuberculosis against the CAMPs produced by competiting microorganisms (bacteriocins). In fact, the modification of anionic phosphatidylglycerol with positively charged L-lysine results in repulsion of the peptides. The chain is Lysylphosphatidylglycerol biosynthesis bifunctional protein LysX (lysX) from Mycobacterium avium (strain 104).